Reading from the N-terminus, the 382-residue chain is Anhydro-N-acetylmuramic acid kinase (382 aa).

Residue 22–29 (GTSMDGVD) coordinates ATP.

This sequence belongs to the anhydro-N-acetylmuramic acid kinase family.

It catalyses the reaction 1,6-anhydro-N-acetyl-beta-muramate + ATP + H2O = N-acetyl-D-muramate 6-phosphate + ADP + H(+). It functions in the pathway amino-sugar metabolism; 1,6-anhydro-N-acetylmuramate degradation. It participates in cell wall biogenesis; peptidoglycan recycling. Functionally, catalyzes the specific phosphorylation of 1,6-anhydro-N-acetylmuramic acid (anhMurNAc) with the simultaneous cleavage of the 1,6-anhydro ring, generating MurNAc-6-P. Is required for the utilization of anhMurNAc either imported from the medium or derived from its own cell wall murein, and thus plays a role in cell wall recycling. The chain is Anhydro-N-acetylmuramic acid kinase from Burkholderia ambifaria (strain ATCC BAA-244 / DSM 16087 / CCUG 44356 / LMG 19182 / AMMD) (Burkholderia cepacia (strain AMMD)).